The sequence spans 522 residues: Transactivator/viroplasmin protein (522 aa).

Polar residues predominate over residues 111-126 (QGIQIPQKSEPNSSVA). Disordered regions lie at residues 111 to 133 (QGIQIPQKSEPNSSVAPNRAESG) and 491 to 522 (SADSKVADKEGPPLTTNVEKEDVSTTSSKASG).

It belongs to the caulimoviridae viroplasmin family.

The protein localises to the host cytoplasm. In terms of biological role, enhances the ribosomal termination-reinitiation event leading to the translation of major open reading frames on the polycistronic viral RNAs. The protein is Transactivator/viroplasmin protein of Arabidopsis thaliana (Mouse-ear cress).